The following is a 51-amino-acid chain: Insulin (51 aa).

3 cysteine pairs are disulfide-bonded: Cys7/Cys37, Cys19/Cys50, and Cys36/Cys41.

Belongs to the insulin family. As to quaternary structure, heterodimer of a B chain and an A chain linked by two disulfide bonds.

It is found in the secreted. Its function is as follows. Insulin decreases blood glucose concentration. It increases cell permeability to monosaccharides, amino acids and fatty acids. It accelerates glycolysis, the pentose phosphate cycle, and glycogen synthesis in liver. The protein is Insulin (INS) of Saimiri sciureus (Common squirrel monkey).